Consider the following 799-residue polypeptide: Protein phosphatase 1 regulatory subunit 3F (799 aa).

The disordered stretch occupies residues 1 to 30 (MARTAPVEPPLRHPAPPSPAAGEPRASAEA). The Cytoplasmic portion of the chain corresponds to 1-772 (MARTAPVEPP…LTQTLGVLAG (772 aa)). Pro residues predominate over residues 7-19 (VEPPLRHPAPPSP). Ser-18 carries the phosphoserine modification. Over residues 20-30 (AAGEPRASAEA) the composition is skewed to low complexity. The PP1-binding motif signature appears at 36–39 (RVLF). Disordered stretches follow at residues 53–108 (RYRP…PVPA), 201–235 (SPPG…SPDD), 332–353 (RRRP…LAEH), and 417–439 (ATCG…DRAA). Over residues 78–97 (ADEEDDGEDGDEGEEEEEAF) the composition is skewed to acidic residues. Residues 127–283 (LERLGRVMVE…NNHGRNYTVL (157 aa)) form the CBM21 domain. Positions 334–353 (RPFEEEPRMRSADDNTLAEH) are enriched in basic and acidic residues. Ser-545 carries the post-translational modification Phosphoserine. Disordered regions lie at residues 566–600 (KDTE…PPEI), 663–688 (SKSP…SWVP), and 722–743 (PHVN…KRSP). Over residues 569 to 579 (EDPDDEGEGED) the composition is skewed to acidic residues. Residues 585-594 (PSSPEGGSPK) are compositionally biased toward low complexity. A phosphoserine mark is found at Ser-587 and Ser-592. Residues 679-688 (PTERESSWVP) are compositionally biased toward basic and acidic residues. The chain crosses the membrane as a helical span at residues 773–793 (LVMVPVALNSGVSLLVLVLCL). At 794–799 (SLAWFS) the chain is on the extracellular side.

Highly expressed in brain (at protein level).

It is found in the membrane. Glycogen-targeting subunit for protein phosphatase 1 (PP1). This Mus musculus (Mouse) protein is Protein phosphatase 1 regulatory subunit 3F (Ppp1r3f).